The following is a 1259-amino-acid chain: Ankyrin repeat and sterile alpha motif domain-containing protein 1B (1259 aa).

ANK repeat units follow at residues 2 to 31 (GKDQELLEAARTGNVALVEKLLSGRKGGIL), 58 to 87 (SGYTALHHAALNGHKDIVLKLLQYEASTNV), 91 to 120 (KGYFPIHLAAWKGDVEIVKILIHHGPSHSR), 127 to 156 (ENETALHCAAQYGHSEVVAVLLEELTDPTI), 160 to 189 (KLETPLDLAALYGRLRVVKMIISAHPNLMS), 193 to 222 (RKHTPLHLAARNGHKAVVQVLLEAGMDVSC), and 225 to 254 (EKGSALHEAALFGKVDVVRVLLETGIDANI). A disordered region spans residues 298–325 (HAQEDTAQETHLSSPAESPQKTKSETVT). Over residues 306–325 (ETHLSSPAESPQKTKSETVT) the composition is skewed to polar residues. 5 positions are modified to phosphoserine: serine 310, serine 311, serine 315, serine 353, and serine 364. Disordered stretches follow at residues 367–401 (ELGKNGSQSVRTSSTINLSPGEVEDEEEDPNSCGP), 490–513 (PGTSHHRNSSTGPTPDCSPPSPDT), 556–614 (CTSF…GSSP), and 631–661 (TCEDGPDEASLANSPLPFKQTPIENNPEPSV). A compositionally biased stretch (polar residues) spans 371–384 (NGSQSVRTSSTINL). Phosphothreonine is present on threonine 503. Phosphoserine occurs at positions 507 and 510. Residues 556-574 (CTSFTSSPAASPPTSSVET) show a composition bias toward low complexity. The span at 575-587 (TEVKNEGAEHADD) shows a compositional bias: basic and acidic residues. At serine 738 the chain carries Phosphoserine. A disordered region spans residues 753-776 (VNWSKSSTAERSSKDNSERTPSFT). Residue threonine 772 is modified to Phosphothreonine. Phosphoserine is present on serine 774. SAM domains are found at residues 809–875 (CPVQ…LPKM) and 883–948 (YHPT…RLHD). Residue tyrosine 900 is modified to Phosphotyrosine. A short sequence motif (nuclear localization signal) is located at residue histidine 934. Residues 943 to 988 (GDRLHDDPPQKPPRSITLREPSGNHTPPQLSPSLSQSTYTTGGSLD) form a disordered region. Low complexity predominate over residues 968 to 983 (TPPQLSPSLSQSTYTT). Phosphoserine is present on serine 973. Residue tyrosine 1006 is modified to Phosphotyrosine. Residues 1055–1212 (IFQSCDYKAF…SFENKPSKPI (158 aa)) form the PID domain. Residues 1196-1216 (HSSTLPESFENKPSKPIPKPR) form a disordered region.

Interacts with EPHA8. Isoform 2 interacts with COIL.

The protein resides in the cytoplasm. It is found in the nucleus. The protein localises to the postsynaptic density. Its subcellular location is the cell projection. It localises to the dendritic spine. Isoform 2 may participate in the regulation of nucleoplasmic coilin protein interactions in neuronal and transformed cells. In Mus musculus (Mouse), this protein is Ankyrin repeat and sterile alpha motif domain-containing protein 1B (Anks1b).